Consider the following 339-residue polypeptide: Lymphocyte-specific protein 1 (339 aa).

Residues 1-198 are disordered; it reads MAEASSDPGA…SPPLSPTTKL (198 aa). At Ser-24 the chain carries Phosphoserine. Basic and acidic residues-rich tracts occupy residues 32-43 and 51-61; these read VHEQCQHERDRQ and GGGHVPERPKQ. Residue Ser-111 is modified to Phosphoserine. Positions 117 to 140 are enriched in basic and acidic residues; that stretch reads EDRPGLHAYEKEDSDEVHLEELSL. Position 175 is a phosphothreonine (Thr-175). Ser-177, Ser-188, Ser-189, and Ser-193 each carry phosphoserine. A compositionally biased stretch (polar residues) spans 185–196; sequence IEQSSPPLSPTT. Ser-252 carries the phosphoserine; by MAPKAPK2 modification. The segment at 294–315 is disordered; it reads KSLWEQKGGSKTSSTIKSTPSG. Low complexity predominate over residues 300–315; sequence KGGSKTSSTIKSTPSG. Lys-327 carries the N6-acetyllysine modification.

As to quaternary structure, binds actin. Phosphorylated by casein kinase II, protein kinase C and MAPKAPK2. Phosphorylation by PKC induces translocation from membrane to cytoplasm. Phosphorylation by MAPKAPK2 may regulate neutrophil chemotaxis. In terms of tissue distribution, activated T-lymphocytes.

The protein localises to the cell membrane. Its function is as follows. May play a role in mediating neutrophil activation and chemotaxis. The polypeptide is Lymphocyte-specific protein 1 (LSP1) (Homo sapiens (Human)).